The following is a 188-amino-acid chain: Threonylcarbamoyl-AMP synthase (188 aa).

The region spanning 8-188 (EGAQPGLHAY…DLATGKILRA (181 aa)) is the YrdC-like domain.

Belongs to the SUA5 family. TsaC subfamily.

It is found in the cytoplasm. The catalysed reaction is L-threonine + hydrogencarbonate + ATP = L-threonylcarbamoyladenylate + diphosphate + H2O. In terms of biological role, required for the formation of a threonylcarbamoyl group on adenosine at position 37 (t(6)A37) in tRNAs that read codons beginning with adenine. Catalyzes the conversion of L-threonine, HCO(3)(-)/CO(2) and ATP to give threonylcarbamoyl-AMP (TC-AMP) as the acyladenylate intermediate, with the release of diphosphate. This is Threonylcarbamoyl-AMP synthase from Thiobacillus denitrificans (strain ATCC 25259 / T1).